Here is a 163-residue protein sequence, read N- to C-terminus: uncharacterized protein (163 aa).

Positions 30–163 (GNENTSVSSD…IYKKLGKKKR (134 aa)) are disordered. Over residues 88–118 (ERQLQKKKEAEKIEGGKNHDNLKRKLNKVGD) the composition is skewed to basic and acidic residues. Over residues 119 to 133 (ELNEQQSDTDDDDDD) the composition is skewed to acidic residues. Ser-125 carries the post-translational modification Phosphoserine. Position 127 is a phosphothreonine (Thr-127).

The protein localises to the nucleus. The protein resides in the nucleolus. This is an uncharacterized protein from Schizosaccharomyces pombe (strain 972 / ATCC 24843) (Fission yeast).